Here is a 1178-residue protein sequence, read N- to C-terminus: DNA-directed RNA polymerase subunit beta (1178 aa).

The tract at residues 1–37 is disordered; it reads MLEGCILPDFGQSKTDVSPSQSRPQSSPNNSVPGAPN. Positions 17–33 are enriched in low complexity; that stretch reads VSPSQSRPQSSPNNSVP.

Belongs to the RNA polymerase beta chain family. In terms of assembly, the RNAP catalytic core consists of 2 alpha, 1 beta, 1 beta' and 1 omega subunit. When a sigma factor is associated with the core the holoenzyme is formed, which can initiate transcription.

It catalyses the reaction RNA(n) + a ribonucleoside 5'-triphosphate = RNA(n+1) + diphosphate. DNA-dependent RNA polymerase catalyzes the transcription of DNA into RNA using the four ribonucleoside triphosphates as substrates. The polypeptide is DNA-directed RNA polymerase subunit beta (Mycobacterium leprae (strain Br4923)).